The following is a 484-amino-acid chain: UDP-N-acetylmuramate--L-alanine ligase (484 aa).

123–129 (GTHGKTT) provides a ligand contact to ATP.

The protein belongs to the MurCDEF family.

It is found in the cytoplasm. The enzyme catalyses UDP-N-acetyl-alpha-D-muramate + L-alanine + ATP = UDP-N-acetyl-alpha-D-muramoyl-L-alanine + ADP + phosphate + H(+). It participates in cell wall biogenesis; peptidoglycan biosynthesis. Its function is as follows. Cell wall formation. The chain is UDP-N-acetylmuramate--L-alanine ligase from Pseudomonas fluorescens (strain ATCC BAA-477 / NRRL B-23932 / Pf-5).